The sequence spans 88 residues: UPF0297 protein SPCG_0205 (88 aa).

Belongs to the UPF0297 family.

This is UPF0297 protein SPCG_0205 from Streptococcus pneumoniae (strain CGSP14).